The primary structure comprises 289 residues: Acetyl-coenzyme A carboxylase carboxyl transferase subunit beta (289 aa).

Positions 28-289 (VMTKCPECKK…QGGEMAVWQS (262 aa)) constitute a CoA carboxyltransferase N-terminal domain. Zn(2+) is bound by residues Cys32, Cys35, Cys51, and Cys54. The segment at 32–54 (CPECKKIMYTKELLKNLKVCVNC) adopts a C4-type zinc-finger fold.

This sequence belongs to the AccD/PCCB family. Acetyl-CoA carboxylase is a heterohexamer composed of biotin carboxyl carrier protein (AccB), biotin carboxylase (AccC) and two subunits each of ACCase subunit alpha (AccA) and ACCase subunit beta (AccD). The cofactor is Zn(2+).

It localises to the cytoplasm. It carries out the reaction N(6)-carboxybiotinyl-L-lysyl-[protein] + acetyl-CoA = N(6)-biotinyl-L-lysyl-[protein] + malonyl-CoA. It participates in lipid metabolism; malonyl-CoA biosynthesis; malonyl-CoA from acetyl-CoA: step 1/1. In terms of biological role, component of the acetyl coenzyme A carboxylase (ACC) complex. Biotin carboxylase (BC) catalyzes the carboxylation of biotin on its carrier protein (BCCP) and then the CO(2) group is transferred by the transcarboxylase to acetyl-CoA to form malonyl-CoA. The protein is Acetyl-coenzyme A carboxylase carboxyl transferase subunit beta of Bacillus cereus (strain ATCC 14579 / DSM 31 / CCUG 7414 / JCM 2152 / NBRC 15305 / NCIMB 9373 / NCTC 2599 / NRRL B-3711).